The sequence spans 357 residues: Glycerol-3-phosphate dehydrogenase [NAD(P)+] (357 aa).

Positions 30, 31, 51, and 124 each coordinate NADPH. Lys124 and Gly152 together coordinate sn-glycerol 3-phosphate. Residue Ala156 coordinates NADPH. Positions 207, 260, 270, 271, and 272 each coordinate sn-glycerol 3-phosphate. The Proton acceptor role is filled by Lys207. Arg271 contributes to the NADPH binding site. Glu297 lines the NADPH pocket.

This sequence belongs to the NAD-dependent glycerol-3-phosphate dehydrogenase family.

It is found in the cytoplasm. The enzyme catalyses sn-glycerol 3-phosphate + NAD(+) = dihydroxyacetone phosphate + NADH + H(+). The catalysed reaction is sn-glycerol 3-phosphate + NADP(+) = dihydroxyacetone phosphate + NADPH + H(+). It participates in membrane lipid metabolism; glycerophospholipid metabolism. In terms of biological role, catalyzes the reduction of the glycolytic intermediate dihydroxyacetone phosphate (DHAP) to sn-glycerol 3-phosphate (G3P), the key precursor for phospholipid synthesis. This chain is Glycerol-3-phosphate dehydrogenase [NAD(P)+], found in Acinetobacter baumannii (strain SDF).